Consider the following 254-residue polypeptide: MMLAKRIIPCLDVHEGRVVKGTNFVNLRDAGDPVELAALYDREGADELVFLDISASAEGRETMVEVVRRTAEQVFIPFTIGGGLRRVEDIRKMLRAGADKVSLNTSAVQTPGLIEEGAHAFGSQCIVVAIDARQTRPGAWEVYIHGGRTPTGKDVLQWAEEVERLGAGEILLTSMNRDGTKNGYDLELTRAVSRAVSLPVIASGGVGTLEHLAEGLTIGEADAVLAASIFHYQEYSIGEAKAYLEERGIPVRKG.

Active-site residues include aspartate 12 and aspartate 131.

This sequence belongs to the HisA/HisF family. Heterodimer of HisH and HisF.

Its subcellular location is the cytoplasm. The enzyme catalyses 5-[(5-phospho-1-deoxy-D-ribulos-1-ylimino)methylamino]-1-(5-phospho-beta-D-ribosyl)imidazole-4-carboxamide + L-glutamine = D-erythro-1-(imidazol-4-yl)glycerol 3-phosphate + 5-amino-1-(5-phospho-beta-D-ribosyl)imidazole-4-carboxamide + L-glutamate + H(+). Its pathway is amino-acid biosynthesis; L-histidine biosynthesis; L-histidine from 5-phospho-alpha-D-ribose 1-diphosphate: step 5/9. Its function is as follows. IGPS catalyzes the conversion of PRFAR and glutamine to IGP, AICAR and glutamate. The HisF subunit catalyzes the cyclization activity that produces IGP and AICAR from PRFAR using the ammonia provided by the HisH subunit. The sequence is that of Imidazole glycerol phosphate synthase subunit HisF from Desulfitobacterium hafniense (strain Y51).